Reading from the N-terminus, the 217-residue chain is FGFR1 oncogene partner 2 homolog (217 aa).

2 coiled-coil regions span residues 6–106 (TIEK…MSKY) and 163–188 (KEQERIIQLEQENKGLREILQITRES). The disordered stretch occupies residues 194–217 (KEDASESTSLSGLVTSSDLSLRKS). Residues 199–217 (ESTSLSGLVTSSDLSLRKS) show a composition bias toward polar residues.

Belongs to the SIKE family.

It localises to the cytoplasm. In Gallus gallus (Chicken), this protein is FGFR1 oncogene partner 2 homolog (FGFR1OP2).